Here is a 98-residue protein sequence, read N- to C-terminus: Large ribosomal subunit protein uL23 (98 aa).

Belongs to the universal ribosomal protein uL23 family. Part of the 50S ribosomal subunit. Contacts protein L29, and trigger factor when it is bound to the ribosome.

In terms of biological role, one of the early assembly proteins it binds 23S rRNA. One of the proteins that surrounds the polypeptide exit tunnel on the outside of the ribosome. Forms the main docking site for trigger factor binding to the ribosome. This chain is Large ribosomal subunit protein uL23, found in Hahella chejuensis (strain KCTC 2396).